An 891-amino-acid polypeptide reads, in one-letter code: MMMNSTIRQGWQQVLKRFSIPASGDRLIISNPTDQPIGLFGAFDTSLQTLSQVGDDPEVLKQKIHIPTHLDIASALEASPRSFPWIFLTNSFCTFGGSIHAQNLQAFATAEFKSGFCYMNLLVPLSFDIIDAHADSFRVFVEQLPDMLGAYPSLSMVLNVMLHAATRFPEIVSSPVPTIAFDAESLQFHVTDKRGVPGMWNILKAGRVYELLSLAADGVGCEYMLYPVGAAPQYSFWKKSMDHFTSDRFVEFLAMQNLLASALEQDYTTHDALDALLAALQNAGYTNVVARERRFPNGHDPSTVWLNLSEAPISEKLTDLKRYLLVGHRSDDTADITHNVHQYVFEVLKTMSVQFSKRTNAYNRARFEVNHKVIWNAEYGRGPQQNAELEALVLFLNRQSLEIENILHRTTSPVVVTNWQPDVPTAAPEVSEGEPTHAVATPMTEAPAHATPVEVVNLPSTRSYWAETLVGVLTAVLGTIFALLTRALIRAKRLRRKPTFPWVTLDSGDEDDDHSGGGGGGPQTPGGQPPASPAHRTHQSRLSVQDIASDTSLLSVDLDEDTLSQYDETFQRIRRALFETSFTDILQNSARWISALEAMALADGNAPYTLLAQYLNGIEEAYTSFRNTGHVSRATLSSFFALEDSLRAAGIAFGATTPTQTIQNQFADSPARRWKTRFEQIACELGDASIKSLADLADIIDTERERSDLTQFDVLAASSISSLCRAVRIISDTTDPDAQLALVENATAMQNNINAILGTNVSIPFLSATRRLLVTRRIQQAGAENRSGATPETIQQLADAELIVSEANMFNEMATSQRDIANATQEATIREHVLSPVNALANVGMAAAFFRSGGMRSRALHPAMPTMPGVSAATGRPIFQAFRGRGHRLNR.

A Peptidase C6 domain is found at 109–229 (TAEFKSGFCY…GCEYMLYPVG (121 aa)). Active-site for helper component proteinase activity residues include Cys117 and His189. Positions 502–540 (WVTLDSGDEDDDHSGGGGGGPQTPGGQPPASPAHRTHQS) are disordered.

It belongs to the bymoviruses polyprotein 2 family. The viral RNA2 of bymoviruses is expressed as a single polyprotein which undergoes post-translational proteolytic processing resulting in the production of at least two individual proteins. The HC-pro cleaves its C-terminus autocatalytically (Potential).

The catalysed reaction is Hydrolyzes a Gly-|-Gly bond at its own C-terminus, commonly in the sequence -Tyr-Xaa-Val-Gly-|-Gly, in the processing of the potyviral polyprotein.. This is Genome polyprotein 2 (RNA2) from Hordeum vulgare (Barley).